A 134-amino-acid polypeptide reads, in one-letter code: Small ribosomal subunit protein uS11 (134 aa).

Residues 114-134 (TPVPHNGTRPPRKWFKRQEKR) are disordered. Residues 123–134 (PPRKWFKRQEKR) are compositionally biased toward basic residues.

This sequence belongs to the universal ribosomal protein uS11 family. As to quaternary structure, part of the 30S ribosomal subunit. Interacts with proteins S7 and S18. Binds to IF-3.

Its function is as follows. Located on the platform of the 30S subunit, it bridges several disparate RNA helices of the 16S rRNA. Forms part of the Shine-Dalgarno cleft in the 70S ribosome. The protein is Small ribosomal subunit protein uS11 of Mesomycoplasma hyopneumoniae (strain J / ATCC 25934 / NCTC 10110) (Mycoplasma hyopneumoniae).